The primary structure comprises 161 residues: Protein PLANT CADMIUM RESISTANCE 12 (161 aa).

A helical transmembrane segment spans residues 71–89 (AGLIHLALGFIGCSWLYAF).

This sequence belongs to the cornifelin family.

Its subcellular location is the membrane. In terms of biological role, may be involved in heavy metals transport. The polypeptide is Protein PLANT CADMIUM RESISTANCE 12 (PCR12) (Arabidopsis thaliana (Mouse-ear cress)).